The sequence spans 120 residues: NAD(P)H-quinone oxidoreductase subunit 3, chloroplastic (120 aa).

The next 3 membrane-spanning stretches (helical) occupy residues 9-29 (IFWTFLIIASLIPILAFWISG), 64-84 (MFALVFVVFDVETVFLYPWAM), and 88-108 (VLGVSVFIEAFIFVLILVVGL).

Belongs to the complex I subunit 3 family. In terms of assembly, NDH is composed of at least 16 different subunits, 5 of which are encoded in the nucleus.

It is found in the plastid. The protein localises to the chloroplast thylakoid membrane. The enzyme catalyses a plastoquinone + NADH + (n+1) H(+)(in) = a plastoquinol + NAD(+) + n H(+)(out). It catalyses the reaction a plastoquinone + NADPH + (n+1) H(+)(in) = a plastoquinol + NADP(+) + n H(+)(out). Functionally, NDH shuttles electrons from NAD(P)H:plastoquinone, via FMN and iron-sulfur (Fe-S) centers, to quinones in the photosynthetic chain and possibly in a chloroplast respiratory chain. The immediate electron acceptor for the enzyme in this species is believed to be plastoquinone. Couples the redox reaction to proton translocation, and thus conserves the redox energy in a proton gradient. This is NAD(P)H-quinone oxidoreductase subunit 3, chloroplastic from Brachypodium distachyon (Purple false brome).